Consider the following 583-residue polypeptide: MYRSHNCGELNATHINKEVTLAGWVQKSRDKGFMNWVDLRDRYGITQLMFDESRSDKTVFELAKTLGREFVIQVKGTVIEREAKNKNISTGEIEILVTQMTILNSSLTPPFTIEDETDGGEDIRMKYRYLDIRRNPVKNSLLFRHKVAMEVRKYLSDLDFCEVETPYLIKSTPEGARDFVVPSRMNEGQFYALPQSPQTFKQLLMVGGMDKYFQIVKCFRDEDLRADRQPEFTQIDCEMAFVEQEDILNIFEGLTRHLLKELKGIEVEKFPRMTYNHAMKTYGNDKPDIRFGMEFGELNEYAKHKDFPVFNAAELVVAIAVPGVGEYSRKEIDALIEWVKRPQVGASGMVYVKCNEDGTYKSSVDKFYDQGDLSHWAKTTGAKAGDMIFVLSGPADKTRAQLSALRMELATRLGLRNPAEFAPLWVVDFPLLEFDEESGRYHAMHHPFTSPKPEDMHLLETDPKSVRANAYDMVLNGNEIGGGSIRIHDKNTQALMFKYLGFTEEEAKNQFGFLMDAFQFGAPPHGGLAFGLDRLVAILGGQETIRDFIAFPKNNSGRDVMIDAPSIIDDSQLKELHIQLDLK.

Glutamate 174 contacts L-aspartate. Positions 198–201 (QTFK) are aspartate. Arginine 220 is a binding site for L-aspartate. Residues 220 to 222 (RDE) and glutamine 229 contribute to the ATP site. Histidine 445 provides a ligand contact to L-aspartate. An ATP-binding site is contributed by glutamate 479. Arginine 486 provides a ligand contact to L-aspartate. 531 to 534 (GLDR) is an ATP binding site.

It belongs to the class-II aminoacyl-tRNA synthetase family. Type 1 subfamily. As to quaternary structure, homodimer.

Its subcellular location is the cytoplasm. The catalysed reaction is tRNA(Asp) + L-aspartate + ATP = L-aspartyl-tRNA(Asp) + AMP + diphosphate. Catalyzes the attachment of L-aspartate to tRNA(Asp) in a two-step reaction: L-aspartate is first activated by ATP to form Asp-AMP and then transferred to the acceptor end of tRNA(Asp). The sequence is that of Aspartate--tRNA ligase from Flavobacterium psychrophilum (strain ATCC 49511 / DSM 21280 / CIP 103535 / JIP02/86).